The sequence spans 237 residues: tRNA(His) guanylyltransferase (237 aa).

Ala-2 bears the N-acetylalanine mark. Positions 29 and 30 each coordinate Mg(2+). Positions 32, 33, 34, 44, and 47 each coordinate GTP. Mg(2+) is bound at residue Asp-77.

It belongs to the tRNA(His) guanylyltransferase family. In terms of assembly, homotetramer. It depends on Mg(2+) as a cofactor.

It catalyses the reaction a 5'-end ribonucleotide-tRNA(His) + GTP + ATP + H2O = a 5'-end phospho-guanosine-ribonucleotide-tRNA(His) + AMP + 2 diphosphate + H(+). The catalysed reaction is a 5'-end ribonucleotide-RNA + a ribonucleoside 5'-triphosphate + ATP + H2O = a 5'-end phospho-ribonucleoside-ribonucleotide-RNA + AMP + 2 diphosphate + H(+). Acts as a tRNA(His) guanylyltransferase that catalyzes 3'-5' addition of a single guanosine residue to the -1 position of tRNA(His), to form a non-Watson-Crick G(-1):A-73 base pair. After addition of G(-1), THG1 removes pyrophosphate from the tRNA 5'-end, generating 5'-monophosphorylated G(-1)-containing tRNA which is important for recognition of tRNA(His) by its cognate histidyl-tRNA synthetase. In addition to the single-G(-1) addition reaction, THG1 polymerizes multiple G residues to the 5'-end of tRNA(His) variants using the 3'-end of the tRNA(His) acceptor stem as a template. The protein is tRNA(His) guanylyltransferase of Saccharomyces cerevisiae (strain ATCC 204508 / S288c) (Baker's yeast).